Consider the following 240-residue polypeptide: Putative N-acetylmannosamine-6-phosphate 2-epimerase (240 aa).

Belongs to the NanE family.

It carries out the reaction an N-acyl-D-glucosamine 6-phosphate = an N-acyl-D-mannosamine 6-phosphate. The protein operates within amino-sugar metabolism; N-acetylneuraminate degradation; D-fructose 6-phosphate from N-acetylneuraminate: step 3/5. In terms of biological role, converts N-acetylmannosamine-6-phosphate (ManNAc-6-P) to N-acetylglucosamine-6-phosphate (GlcNAc-6-P). The protein is Putative N-acetylmannosamine-6-phosphate 2-epimerase of Vibrio cholerae serotype O1 (strain ATCC 39541 / Classical Ogawa 395 / O395).